Consider the following 447-residue polypeptide: Putative branched-chain amino acid carrier protein SSP1343 (447 aa).

The next 12 helical transmembrane spans lie at 6–26, 40–60, 74–94, 116–136, 143–163, 192–212, 228–248, 289–309, 324–344, 349–369, 381–401, and 416–436; these read WIIG…IFPP, ILAF…VGAL, PKFS…LFAI, LALF…CINP, IGSL…VKGF, GYLT…VNAV, LMAG…LGYI, LLGI…VVAV, IYVI…LNSV, VPVL…ILLA, IPVA…QGWI, and LEWF…AAMV.

Belongs to the branched chain amino acid transporter family.

It localises to the cell membrane. In terms of biological role, component of the transport system for branched-chain amino acids (leucine, isoleucine and valine), which is coupled to a proton motive force. In Staphylococcus saprophyticus subsp. saprophyticus (strain ATCC 15305 / DSM 20229 / NCIMB 8711 / NCTC 7292 / S-41), this protein is Putative branched-chain amino acid carrier protein SSP1343.